An 81-amino-acid chain; its full sequence is Putative sulfur carrier protein VNG_5061C/VNG_5236C/VNG_6059C/VNG_6467C (81 aa).

Cysteine 18 serves as the catalytic Cysteine persulfide intermediate.

It belongs to the sulfur carrier protein TusA family.

This is Putative sulfur carrier protein VNG_5061C/VNG_5236C/VNG_6059C/VNG_6467C from Halobacterium salinarum (strain ATCC 700922 / JCM 11081 / NRC-1) (Halobacterium halobium).